The sequence spans 564 residues: Plant UBX domain-containing protein 8 (564 aa).

Alanine 2 bears the N-acetylalanine mark. Residues 2–44 (ATPNQEAIDTFISITGASDAVALQKLEEHRGDLNQAVNAYFSE) form the UBA-like domain. 2 UIM domains span residues 198-217 (IEEE…AEGS) and 230-249 (EDDD…AEEE). The segment at 210-229 (SKKEAEGSSNPLLEERPLHM) is disordered. Disordered stretches follow at residues 267 to 358 (AVTA…EEHD), 371 to 423 (IPET…DKEM), and 443 to 483 (FLEE…QADE). Positions 291–300 (FDDDSDDVDE) are enriched in acidic residues. Phosphoserine is present on residues serine 295, serine 324, serine 326, and serine 328. Over residues 322 to 334 (DRSRSGSPEEEHA) the composition is skewed to basic and acidic residues. Positions 381–395 (FLPPQPRAQPRPPSP) are enriched in pro residues. Residues 412 to 478 (VASLQADRDK…DAKEASLPKE (67 aa)) adopt a coiled-coil conformation. Residues 443–475 (FLEEEKKKEEEAQRKLEEEQELERQLDAKEASL) show a composition bias toward basic and acidic residues. Positions 482-560 (DEENAITLLI…GLTSKQEALF (79 aa)) constitute a UBX domain.

In terms of assembly, interacts with RABA5C/ARA-4.

This is Plant UBX domain-containing protein 8 from Arabidopsis thaliana (Mouse-ear cress).